A 180-amino-acid polypeptide reads, in one-letter code: Telokin-like protein 20 (180 aa).

The interval 112-180 (SKTDAAVHTS…KQKLDNAKQD (69 aa)) is disordered. Positions 156–165 (DFEENIDDGD) are enriched in acidic residues.

This chain is Telokin-like protein 20 (TLP20), found in Lepidoptera (butterflies and moths).